The chain runs to 1177 residues: Tyrosine-protein kinase hopscotch (1177 aa).

The tract at residues 1-41 (MALANGGEDRMDDSSSGRTSLADSASLTNSSLRSGTSSQSI) is disordered. Positions 16–41 (SGRTSLADSASLTNSSLRSGTSSQSI) are enriched in polar residues. 2 positions are modified to phosphoserine: serine 40 and serine 321. The FERM domain maps to 46 to 414 (GTIRVFNFTT…IYIRLSSKWM (369 aa)). One can recognise an SH2; atypical domain in the interval 433–539 (HCHGPIGGAY…YRIPASKYDK (107 aa)). Protein kinase domains lie at 582–843 (YPDS…AEIL) and 892–1164 (YNME…HPTD). Residues 898–906 (IGRGHYGTV) and lysine 926 each bind ATP. The Proton acceptor role is filled by aspartate 1014. Phosphotyrosine; by autocatalysis is present on residues tyrosine 1047 and tyrosine 1048. The disordered stretch occupies residues 1158–1177 (KVTHPTDGHQSPPNQPTDAE).

The protein belongs to the protein kinase superfamily. Tyr protein kinase family. JAK subfamily. In terms of assembly, forms a complex with Hsp83 and piwi; probably Hop mediates the interaction between piwi and Hsp83.

The protein resides in the endomembrane system. The enzyme catalyses L-tyrosyl-[protein] + ATP = O-phospho-L-tyrosyl-[protein] + ADP + H(+). Functionally, tyrosine kinase of the non-receptor type, phosphorylates the marelle protein. Required maternally for the establishment of the normal array of embryonic segments: involved in the control of pair-rule gene transcription in a stripe-specific manner. Together with Hsp83 and piwi, mediates canalization, also known as developmental robustness, likely via epigenetic silencing of existing genetic variants and suppression of transposon-induced new genetic variation. The chain is Tyrosine-protein kinase hopscotch (hop) from Drosophila melanogaster (Fruit fly).